A 267-amino-acid polypeptide reads, in one-letter code: tRNA (guanine-N(1)-)-methyltransferase (267 aa).

S-adenosyl-L-methionine-binding positions include Gly119 and 139–144; that span reads IGDYVL.

Belongs to the RNA methyltransferase TrmD family. Homodimer.

Its subcellular location is the cytoplasm. The catalysed reaction is guanosine(37) in tRNA + S-adenosyl-L-methionine = N(1)-methylguanosine(37) in tRNA + S-adenosyl-L-homocysteine + H(+). In terms of biological role, specifically methylates guanosine-37 in various tRNAs. In Chromohalobacter salexigens (strain ATCC BAA-138 / DSM 3043 / CIP 106854 / NCIMB 13768 / 1H11), this protein is tRNA (guanine-N(1)-)-methyltransferase.